The chain runs to 185 residues: Ribosome-recycling factor (185 aa).

Belongs to the RRF family.

Its subcellular location is the cytoplasm. Responsible for the release of ribosomes from messenger RNA at the termination of protein biosynthesis. May increase the efficiency of translation by recycling ribosomes from one round of translation to another. The protein is Ribosome-recycling factor of Listeria monocytogenes serovar 1/2a (strain ATCC BAA-679 / EGD-e).